Here is a 327-residue protein sequence, read N- to C-terminus: Lipoyl synthase (327 aa).

[4Fe-4S] cluster-binding residues include Cys74, Cys79, Cys85, Cys100, Cys104, Cys107, and Ser314. The region spanning 86-303 (FSGGTATFMI…AEEGEKMGFK (218 aa)) is the Radical SAM core domain.

The protein belongs to the radical SAM superfamily. Lipoyl synthase family. [4Fe-4S] cluster is required as a cofactor.

The protein resides in the cytoplasm. It carries out the reaction [[Fe-S] cluster scaffold protein carrying a second [4Fe-4S](2+) cluster] + N(6)-octanoyl-L-lysyl-[protein] + 2 oxidized [2Fe-2S]-[ferredoxin] + 2 S-adenosyl-L-methionine + 4 H(+) = [[Fe-S] cluster scaffold protein] + N(6)-[(R)-dihydrolipoyl]-L-lysyl-[protein] + 4 Fe(3+) + 2 hydrogen sulfide + 2 5'-deoxyadenosine + 2 L-methionine + 2 reduced [2Fe-2S]-[ferredoxin]. It functions in the pathway protein modification; protein lipoylation via endogenous pathway; protein N(6)-(lipoyl)lysine from octanoyl-[acyl-carrier-protein]: step 2/2. In terms of biological role, catalyzes the radical-mediated insertion of two sulfur atoms into the C-6 and C-8 positions of the octanoyl moiety bound to the lipoyl domains of lipoate-dependent enzymes, thereby converting the octanoylated domains into lipoylated derivatives. In Pseudomonas aeruginosa (strain LESB58), this protein is Lipoyl synthase.